The chain runs to 291 residues: Beta-lactamase CTX-M-4 (291 aa).

Positions methionine 1–alanine 28 are cleaved as a signal peptide. Catalysis depends on serine 73, which acts as the Acyl-ester intermediate. Lysine 237–glycine 239 provides a ligand contact to substrate.

This sequence belongs to the class-A beta-lactamase family.

The catalysed reaction is a beta-lactam + H2O = a substituted beta-amino acid. Functionally, has cefotaxime-hydrolyzing activity. The chain is Beta-lactamase CTX-M-4 (bla) from Salmonella typhimurium.